The sequence spans 272 residues: 5'-nucleotidase SurE (272 aa).

D8, D9, S39, and N96 together coordinate a divalent metal cation.

Belongs to the SurE nucleotidase family. It depends on a divalent metal cation as a cofactor.

The protein localises to the cytoplasm. The enzyme catalyses a ribonucleoside 5'-phosphate + H2O = a ribonucleoside + phosphate. Functionally, nucleotidase that shows phosphatase activity on nucleoside 5'-monophosphates. The sequence is that of 5'-nucleotidase SurE from Heliobacterium modesticaldum (strain ATCC 51547 / Ice1).